A 279-amino-acid polypeptide reads, in one-letter code: Ultraviolet N-glycosylase/AP lyase (279 aa).

The HhH domain maps to 123–142 (LEDLVALPGVGRKTAFVVLG). The [4Fe-4S] cluster site is built by Cys203, Cys210, Cys213, and Cys219. The tract at residues 256 to 279 (TAGAAGPRPRAGGXAPGLPAQPFR) is disordered.

This sequence belongs to the Nth/MutY family. [4Fe-4S] cluster serves as cofactor.

Its function is as follows. DNA repair enzyme that has both DNA N-glycosylase activity and AP-lyase activity. Initiates repair at cis-syn pyrimidine dimers. Proceeds via an imino enzyme:DNA intermediate. This chain is Ultraviolet N-glycosylase/AP lyase (pdg), found in Micrococcus luteus (strain ATCC 4698 / DSM 20030 / JCM 1464 / CCM 169 / CCUG 5858 / IAM 1056 / NBRC 3333 / NCIMB 9278 / NCTC 2665 / VKM Ac-2230) (Micrococcus lysodeikticus).